Consider the following 479-residue polypeptide: Odorant receptor coreceptor (479 aa).

At 1–43 the chain is on the cytoplasmic side; the sequence is MHVQPTKYHGLVLDLMPNIRLMQGFGHFLFRYVSGPVLIRKLY. The chain crosses the membrane as a helical span at residues 44–64; the sequence is SWWNLIMILLQYFAIMGNLVM. Residues 65-73 lie on the Extracellular side of the membrane; it reads NTGDVNELT. A helical transmembrane segment spans residues 74–94; it reads ANTITTLFFTHSVTKFIYVAV. The Cytoplasmic segment spans residues 95-133; sequence NSEHFYRTLGIWNQPNSHSLFAESDARYHSIALAKMRKL. Residues 134 to 154 form a helical membrane-spanning segment; the sequence is LVMVMVTTVLSVVAWITITFF. The Extracellular portion of the chain corresponds to 155 to 187; that stretch reads GDSVKNVFDKETNETYTVEIPRLPIKALYPWDA. Asn167 carries an N-linked (GlcNAc...) asparagine glycan. A helical transmembrane segment spans residues 188–208; it reads MSGVPYFFSFVYQAYFLLFSM. Residues 209–344 lie on the Cytoplasmic side of the membrane; that stretch reads CQANLADVMF…VERHKHVVRL (136 aa). A helical transmembrane segment spans residues 345–365; it reads VSAIGETYGAALLLHMLTSTI. The Extracellular portion of the chain corresponds to 366-383; sequence KLTLLAYQATKIDALNVY. Residues 384–404 traverse the membrane as a helical segment; the sequence is GLTVIGYLVYALAQVFLFCIF. Topologically, residues 405-455 are cytoplasmic; that stretch reads GNRLIEESSSVMEAAYSCHWYDGSEEAKTFVQIVCQQCQKAMTISGAKFFT. Residues 456 to 476 traverse the membrane as a helical segment; the sequence is VSLDLFASVLGAVVTYFMVLV. Topologically, residues 477 to 479 are extracellular; it reads QLK.

The protein belongs to the insect chemoreceptor superfamily. Heteromeric odorant receptor channel (TC 1.A.69) family. Orco subfamily. As to quaternary structure, heterodimer with conventional odorant receptors (ORs). In terms of tissue distribution, expressed in female antenna, maxillary palp and proboscis. Not detected in male tissues.

It localises to the cell membrane. Its function is as follows. Odorant coreceptor which complexes with conventional odorant receptors (ORs) to form odorant-sensing units, providing sensitive and prolonged odorant signaling and calcium permeability. Orco is a universal and integral part of the functional odorant receptor, involved in the dendritic localization of other olfactory receptors. Required for detecting a host for blood feeding. Plays a key role in preferred attraction of females for humans over non-human hosts for blood feeding. This is Odorant receptor coreceptor from Aedes albopictus (Asian tiger mosquito).